The following is a 259-amino-acid chain: 5'-nucleotidase SurE (259 aa).

A divalent metal cation contacts are provided by Asp11, Asp12, Ser42, and Asn99.

It belongs to the SurE nucleotidase family. Requires a divalent metal cation as cofactor.

The protein resides in the cytoplasm. It catalyses the reaction a ribonucleoside 5'-phosphate + H2O = a ribonucleoside + phosphate. Functionally, nucleotidase that shows phosphatase activity on nucleoside 5'-monophosphates. In Cytophaga hutchinsonii (strain ATCC 33406 / DSM 1761 / CIP 103989 / NBRC 15051 / NCIMB 9469 / D465), this protein is 5'-nucleotidase SurE.